Here is a 291-residue protein sequence, read N- to C-terminus: 4-hydroxy-tetrahydrodipicolinate synthase (291 aa).

Thr44 contributes to the pyruvate binding site. The active-site Proton donor/acceptor is the Tyr132. Lys160 (schiff-base intermediate with substrate) is an active-site residue. Val202 contacts pyruvate.

It belongs to the DapA family. Homotetramer; dimer of dimers.

Its subcellular location is the cytoplasm. The catalysed reaction is L-aspartate 4-semialdehyde + pyruvate = (2S,4S)-4-hydroxy-2,3,4,5-tetrahydrodipicolinate + H2O + H(+). The protein operates within amino-acid biosynthesis; L-lysine biosynthesis via DAP pathway; (S)-tetrahydrodipicolinate from L-aspartate: step 3/4. Catalyzes the condensation of (S)-aspartate-beta-semialdehyde [(S)-ASA] and pyruvate to 4-hydroxy-tetrahydrodipicolinate (HTPA). The protein is 4-hydroxy-tetrahydrodipicolinate synthase of Clostridium perfringens (strain 13 / Type A).